We begin with the raw amino-acid sequence, 87 residues long: Selenoprotein W (87 aa).

The segment at residues 10–13 (CGAU) is a cross-link (cysteinyl-selenocysteine (Cys-Sec); redox-active). A non-standard amino acid (selenocysteine) is located at residue U13. An S-glutathionyl cysteine modification is found at C37.

Belongs to the SelWTH family. Selenoprotein W subfamily. In terms of assembly, interacts with DPYSL2, PRDX1, YWHAB, YWHAG, HSP70 and HSP90. As to expression, detected in muscle, heart, tongue, brain, lung, spleen, kidney and liver. Highest levels expressed in muscle and heart whereas lowest levels detected in liver (at protein level).

Its subcellular location is the cytoplasm. Plays a role as a glutathione (GSH)-dependent antioxidant. May be involved in a redox-related process. May play a role in the myopathies of selenium deficiency. In Ovis aries (Sheep), this protein is Selenoprotein W.